Consider the following 105-residue polypeptide: Large ribosomal subunit protein uL24 (105 aa).

Residues 77–93 (DGKPTRVGYRKDDETGK) show a composition bias toward basic and acidic residues. A disordered region spans residues 77–105 (DGKPTRVGYRKDDETGKNVRIAKSNGKDL).

The protein belongs to the universal ribosomal protein uL24 family. Part of the 50S ribosomal subunit.

Functionally, one of two assembly initiator proteins, it binds directly to the 5'-end of the 23S rRNA, where it nucleates assembly of the 50S subunit. One of the proteins that surrounds the polypeptide exit tunnel on the outside of the subunit. The protein is Large ribosomal subunit protein uL24 of Mycolicibacterium gilvum (strain PYR-GCK) (Mycobacterium gilvum (strain PYR-GCK)).